A 294-amino-acid chain; its full sequence is Cell division protein ZipA (294 aa).

Position 1 (Met-1) is a topological domain, periplasmic. A helical transmembrane segment spans residues 2 to 22 (EIGLREWLILIGIIVIAGILF). At 23–294 (DGWRRMRGGK…FERRALTQKR (272 aa)) the chain is on the cytoplasmic side. The tract at residues 47–107 (PDEEGSAEVL…GKRAAEMQPQ (61 aa)) is disordered. Basic and acidic residues predominate over residues 82-91 (AREREREQKP).

Belongs to the ZipA family. As to quaternary structure, interacts with FtsZ via their C-terminal domains.

The protein localises to the cell inner membrane. Its function is as follows. Essential cell division protein that stabilizes the FtsZ protofilaments by cross-linking them and that serves as a cytoplasmic membrane anchor for the Z ring. Also required for the recruitment to the septal ring of downstream cell division proteins. In Pseudomonas putida (strain W619), this protein is Cell division protein ZipA.